A 128-amino-acid chain; its full sequence is Azurin (128 aa).

The 128-residue stretch at 1 to 128 folds into the Plastocyanin-like domain; sequence AECKVTVDST…SMMKGTVTLK (128 aa). Residues cysteine 3 and cysteine 26 are joined by a disulfide bond. Residues histidine 46, cysteine 112, histidine 117, and methionine 121 each contribute to the Cu cation site.

It localises to the periplasm. Functionally, transfers electrons from cytochrome c551 to cytochrome oxidase. This is Azurin from Pseudomonas putida (Arthrobacter siderocapsulatus).